We begin with the raw amino-acid sequence, 333 residues long: MRIWWLLLAIEICTGNINSQDTCRQGHPGIPGNPGHNGLPGRDGRDGAKGDKGDAGEPGRPGSPGKDGTSGEKGERGADGKVEAKGIKGDQGSRGSPGKHGPKGLAGPMGEKGLRGETGPQGQKGNKGDVGPTGPEGPRGNIGPLGPTGLPGPMGPIGKPGPKGEAGPTGPQGEPGVRGIRGWKGDRGEKGKIGETLVLPKSAFTVGLTVLSKFPSSDMPIKFDKILYNEFNHYDTAAGKFTCHIAGVYYFTYHITVFSRNVQVSLVKNGVKILHTKDAYMSSEDQASGGIVLQLKLGDEVWLQVTGGERFNGLFADEDDDTTFTGFLLFSSP.

The N-terminal stretch at 1 to 19 (MRIWWLLLAIEICTGNINS) is a signal peptide. Collagen-like domains are found at residues 24–82 (RQGH…DGKV), 95–154 (GSPG…PGPM), and 155–191 (GPIG…GEKG). The tract at residues 24–188 (RQGHPGIPGN…GIRGWKGDRG (165 aa)) is disordered. Residues 26–40 (GHPGIPGNPGHNGLP) are compositionally biased toward low complexity. 3 positions are modified to 4-hydroxyproline: Pro31, Pro34, and Pro40. A compositionally biased stretch (basic and acidic residues) spans 42 to 57 (RDGRDGAKGDKGDAGE). Residues Pro58, Pro61, and Pro64 each carry the 4-hydroxyproline modification. A compositionally biased stretch (basic and acidic residues) spans 69–88 (TSGEKGERGADGKVEAKGIK). Lys73 and Lys127 each carry 5-hydroxylysine. 2 O-linked (Gal...) hydroxylysine glycosylation sites follow: Lys73 and Lys127. Residues Pro151, Pro160, and Pro175 each carry the 4-hydroxyproline modification. Residues 197-333 (LVLPKSAFTV…FTGFLLFSSP (137 aa)) form the C1q domain.

Multimers (predominantly trimers). Interacts with ADIPOQ via the C1q domain to form a heterotrimeric complex. Interacts with CTRP9B. Forms heterotrimers and heterooligomeric complexes with CTRP9B. As to expression, expressed predominantly in adipose tissue.

Its subcellular location is the secreted. Probable adipokine. Activates AMPK, AKT, and p44/42 MAPK signaling pathways. The polypeptide is Complement C1q and tumor necrosis factor-related protein 9A (C1QTNF9) (Homo sapiens (Human)).